The chain runs to 337 residues: DNA-directed RNA polymerase subunit alpha (337 aa).

Positions 1 to 233 are alpha N-terminal domain (alpha-NTD); the sequence is MIQKNWQELI…DQLSVFVNFK (233 aa). The interval 249–337 is alpha C-terminal domain (alpha-CTD); that stretch reads FNPALLKKVD…DLAKHYEDQY (89 aa).

Belongs to the RNA polymerase alpha chain family. Homodimer. The RNAP catalytic core consists of 2 alpha, 1 beta, 1 beta' and 1 omega subunit. When a sigma factor is associated with the core the holoenzyme is formed, which can initiate transcription.

It catalyses the reaction RNA(n) + a ribonucleoside 5'-triphosphate = RNA(n+1) + diphosphate. In terms of biological role, DNA-dependent RNA polymerase catalyzes the transcription of DNA into RNA using the four ribonucleoside triphosphates as substrates. This chain is DNA-directed RNA polymerase subunit alpha, found in Bartonella bacilliformis (strain ATCC 35685 / KC583 / Herrer 020/F12,63).